A 267-amino-acid chain; its full sequence is Cell division control protein 11 (267 aa).

The 258-residue stretch at 6 to 263 folds into the Septin-type G domain; sequence QNRRFTIMAA…ENYRAAVLEG (258 aa). The tract at residues 16 to 23 is G1 motif; that stretch reads GPRGSGKS. Residues 16–23, glycine 66, 146–154, and arginine 212 each bind GTP; these read GPRGSGKS and KSDGLSITE. The G3 motif stretch occupies residues 63–66; the sequence is DTPG. The segment at 145-148 is G4 motif; that stretch reads SKSD.

The protein belongs to the TRAFAC class TrmE-Era-EngA-EngB-Septin-like GTPase superfamily. Septin GTPase family. Component of the septin complex.

Functionally, septins are GTPases involved in cytokinesis. The septins localize to the site of cleavage and act as a structural scaffold that recruits different components involved in diverse processes at specific stages during the cell cycle. Septins are also involved in cell morphogenesis, chitin deposition, cell cycle regulation, cell compartmentalization and spore wall formation. This Encephalitozoon cuniculi (strain GB-M1) (Microsporidian parasite) protein is Cell division control protein 11 (CDC11).